The sequence spans 266 residues: Signal peptidase I (266 aa).

The Cytoplasmic segment spans residues 1–20; the sequence is MQTDNTKSNTNKTAKQEWWS. Residues 21–41 traverse the membrane as a helical segment; that stretch reads CAFVICIALLIRILIMEPFTV. The Periplasmic segment spans residues 42-266; that stretch reads PTGSMKATIL…IFRNLYNTDE (225 aa). Residues S45 and K108 contribute to the active site.

This sequence belongs to the peptidase S26 family.

The protein resides in the cell inner membrane. It carries out the reaction Cleavage of hydrophobic, N-terminal signal or leader sequences from secreted and periplasmic proteins.. The protein is Signal peptidase I (lepB) of Rickettsia akari (strain Hartford).